A 418-amino-acid polypeptide reads, in one-letter code: Probable basic-leucine zipper transcription factor E (418 aa).

The stretch at 8 to 47 (IQQIQQLHMLLQQQQQQQQQQQQQQQQQQQQLQQQNFQLT) forms a coiled coil. Low complexity-rich tracts occupy residues 51 to 71 (FQIP…NNNN) and 95 to 134 (INTT…NNNT). 4 disordered regions span residues 51 to 75 (FQIP…ETAF), 95 to 149 (INTT…KKQK), 165 to 196 (PTAA…TTNT), and 211 to 252 (KNQE…KNRR). Residues 169 to 179 (VKKKPPAKKSA) are compositionally biased toward basic residues. Positions 180 to 196 (KNAASQPTSPTLSTTNT) are enriched in low complexity. The segment covering 220 to 239 (DNSEESDSDEEDFENGDNEN) has biased composition (acidic residues). Positions 246–309 (GDRKNRRLLK…QLMKDKVRYL (64 aa)) constitute a bZIP domain. Residues 248 to 268 (RKNRRLLKNREAAQLFRQRQK) form a basic motif region. The segment at 274–281 (LESKASSL) is leucine-zipper. Residues 324-362 (SVVNQDNINNLNNNLNGLQNQQNNNNNNNNNNNNNNNNN) are a coiled coil. Residues 336 to 418 (NNLNGLQNQQ…DSLLFNLPPD (83 aa)) form a disordered region.

This sequence belongs to the bZIP family.

It is found in the nucleus. Its function is as follows. Probable transcriptional regulator. The protein is Probable basic-leucine zipper transcription factor E (bzpE) of Dictyostelium discoideum (Social amoeba).